We begin with the raw amino-acid sequence, 150 residues long: Large ribosomal subunit protein bL9 (150 aa).

Belongs to the bacterial ribosomal protein bL9 family.

Binds to the 23S rRNA. The polypeptide is Large ribosomal subunit protein bL9 (Shewanella frigidimarina (strain NCIMB 400)).